The following is a 1119-amino-acid chain: Ubiquitin-associated protein 2 (1119 aa).

The disordered stretch occupies residues 1–26; that stretch reads MMTSVSSDHCRGAREKPQISAAQSTQ. Over residues 8 to 17 the composition is skewed to basic and acidic residues; that stretch reads DHCRGAREKP. The UBA domain occupies 48–92; the sequence is KNDSDFEAKVKQLMEVTGKNQDECIVALHDCNGDVNKAINILLEG. Residues 105-130 adopt a coiled-coil conformation; the sequence is KKKNFAKENSENKENREKKSEKESSR. Residues 110–130 are compositionally biased toward basic and acidic residues; sequence AKENSENKENREKKSEKESSR. 7 disordered regions span residues 110–202, 385–476, 622–736, 853–905, 937–966, 982–1020, and 1082–1119; these read AKEN…YSDS, LGQF…SPST, VHNR…SSHQ, RDGS…VNPA, SAKQHGVNLSTPTPPFQQASGYGQHGYSTG, GGYAGSSQAPNKSAGSGPGKGVSVSSSTTGLPDMTGSVY, and HLPQDAQSGSGQRSQPSSLQPKSQASKPAYGNSPYWTN. Omega-N-methylarginine is present on Arg166. Positions 168–182 are enriched in basic residues; the sequence is KRARGRGFGRGRGRG. The segment covering 389-407 has biased composition (low complexity); the sequence is TTTPSTQQNSTSHPTTTTS. Phosphoserine occurs at positions 432, 439, 473, and 630. A compositionally biased stretch (low complexity) spans 435-447; that stretch reads LSQLSQRQQHQSQ. Polar residues predominate over residues 651-662; the sequence is SQQTLDTPKTTG. The segment covering 663-678 has biased composition (low complexity); it reads PPSALPSVSSLPSTTS. Over residues 679–694 the composition is skewed to polar residues; the sequence is CTALLPSTSQHTGDLT. 2 stretches are compositionally biased toward low complexity: residues 695–736 and 874–900; these read SSPL…SSHQ and SASPAPATTPAQPQQSQSQTHHTAQQP. Residues 943-957 show a composition bias toward polar residues; that stretch reads VNLSTPTPPFQQASG. Composition is skewed to low complexity over residues 1002–1011 and 1088–1102; these read GVSVSSSTTG and QSGSGQRSQPSSLQP.

In terms of assembly, may interact with ANXA2.

It is found in the nucleus. It localises to the chromosome. The protein localises to the cytoplasm. Functionally, recruits the ubiquitination machinery to RNA polymerase II for polyubiquitination, removal and degradation, when the transcription-coupled nucleotide excision repair (TC-NER) machinery fails to resolve DNA damage. May promote the degradation of ANXA2. In Homo sapiens (Human), this protein is Ubiquitin-associated protein 2.